The chain runs to 621 residues: uncharacterized protein (621 aa).

Serine 269, serine 271, serine 274, serine 290, and serine 292 each carry phosphoserine. LRR repeat units lie at residues 333-354 (QLLYLRCSSCKLKSIPKNVFLS), 357-379 (SLVSLDLSGNELTEIPYALGELP), 380-401 (QLCSLNLASNKITGCRTFYHIS), 404-425 (HLQILVLSRNHLTSLSGLENVP), 426-447 (SLEKLDIRDNSITDVVEFRRLV), and 451-472 (NFEEAYLSLNPFTKTYSSYRIT). Positions 552 to 581 (SKNASGGDTSSNVSLLNGSASEEIPQNTES) are disordered.

The protein resides in the cytoplasm. The protein localises to the nucleus. It localises to the vacuole membrane. This is an uncharacterized protein from Schizosaccharomyces pombe (strain 972 / ATCC 24843) (Fission yeast).